The chain runs to 219 residues: Uracil-DNA glycosylase (219 aa).

Aspartate 61 (proton acceptor) is an active-site residue.

It belongs to the uracil-DNA glycosylase (UDG) superfamily. UNG family.

Its subcellular location is the cytoplasm. It catalyses the reaction Hydrolyzes single-stranded DNA or mismatched double-stranded DNA and polynucleotides, releasing free uracil.. Excises uracil residues from the DNA which can arise as a result of misincorporation of dUMP residues by DNA polymerase or due to deamination of cytosine. This is Uracil-DNA glycosylase from Neisseria meningitidis serogroup B (strain ATCC BAA-335 / MC58).